A 314-amino-acid polypeptide reads, in one-letter code: Regulator of microtubule dynamics protein 1 (314 aa).

Lys165 carries the N6-succinyllysine modification. TPR repeat units lie at residues 168–204 (AICL…NPKD) and 222–258 (PWYQ…DPNF).

The protein belongs to the RMDN family. In terms of assembly, interacts with microtubules.

Its subcellular location is the cytoplasm. It is found in the cytoskeleton. It localises to the spindle. The protein resides in the spindle pole. In Homo sapiens (Human), this protein is Regulator of microtubule dynamics protein 1 (RMDN1).